We begin with the raw amino-acid sequence, 296 residues long: Myeloid differentiation primary response protein MyD88 (296 aa).

In terms of domain architecture, Death spans 54–109 (MGFEYLEIRELETRPDPTRSLLDAWQGRSGASVGRLLELLALLDREDILKELKSRI). Positions 110 to 155 (EEDCQKYLGKQQNQESEKPLQVARVESSVPQTKELGGITTLDDPLG) are intermediate domain. The TIR domain maps to 159–293 (ELFDAFICYC…WFWTRLAKAL (135 aa)). Ser-244 bears the Phosphoserine mark.

As to quaternary structure, homodimer. Also forms heterodimers with TIRAP. Binds to TLR2, TLR4, IRAK1, IRAK2 and IRAK4 via their respective TIR domains. Interacts with IL18R1. Interacts with BMX, IL1RL1, IKBKE and IRF7. Interacts with LRRFIP1 and LRRFIP2; this interaction positively regulates Toll-like receptor (TLR) signaling in response to agonist. Interacts with FLII. LRRFIP1 and LRRFIP2 compete with FLII for MYD88-binding. Interacts with IRF1. Upon IL1B treatment, forms a complex with PELI1, IRAK1, IRAK4 and TRAF6; this complex recruits MAP3K7/TAK1, TAB1 and TAB2 to mediate NF-kappa-B activation. Direct binding of SMAD6 to PELI1 prevents the complex formation and hence negatively regulates IL1R-TLR signaling and eventually NF-kappa-B-mediated gene expression. May interact with PIK3AP1. Interacts (via TIR domain) with DHX9 (via H2A and OB-fold regions); this interaction is direct. Interacts with OTUD4 deubiquitinase; the interaction is direct. In terms of processing, ubiquitinated; undergoes 'Lys-63'-linked polyubiquitination. OTUD4 specifically hydrolyzes 'Lys-63'-linked polyubiquitinated MYD88. Deubiquitinated by USP3 that cleaves 'Lys-63'-linked ubiquitin chains leading to inhibition of MYD88-induced NF-kappa-B signaling. Detected in bone marrow. Isoform 1 is expressed in testis, kidney, lung, ovary, adrenal gland, provstate, thymus and heart, and weakly in skeletal muscle, liver, spleen and brain. Isoform 2 is mainly expressed in the spleen and weakly in brain.

Its subcellular location is the cytoplasm. It is found in the nucleus. Its function is as follows. Adapter protein involved in the Toll-like receptor and IL-1 receptor signaling pathway in the innate immune response. Acts via IRAK1, IRAK2, IRF7 and TRAF6, leading to NF-kappa-B activation, cytokine secretion and the inflammatory response. Increases IL-8 transcription. Involved in IL-18-mediated signaling pathway. Activates IRF1 resulting in its rapid migration into the nucleus to mediate an efficient induction of IFN-beta, NOS2/INOS, and IL12A genes. Upon TLR8 activation by GU-rich single-stranded RNA (GU-rich RNA) derived from viruses, induces IL1B release through NLRP3 inflammasome activation. MyD88-mediated signaling in intestinal epithelial cells is crucial for maintenance of gut homeostasis and controls the expression of the antimicrobial lectin REG3G in the small intestine. Mediates leukocyte recruitment at the inflammatory site. Functionally, defective in its ability to induce IRAK phosphorylation and NF-kappa-B activation and can function as a negative regulator of activation by IL-1 or lipopolysaccharide (LPS). The protein is Myeloid differentiation primary response protein MyD88 of Mus musculus (Mouse).